We begin with the raw amino-acid sequence, 409 residues long: Sperm equatorial segment protein 1 (409 aa).

A signal peptide spans 1–18 (MKPVVLVALLWLWPSSFL). The N-linked (GlcNAc...) asparagine glycan is linked to Asn132. Residues 141-223 (EPYIEKEPEP…TTNTQGTPNT (83 aa)) are disordered. The segment covering 167-177 (PEPEPESESAP) has biased composition (acidic residues). Residues 198–208 (NKVRTGTSRMS) show a composition bias toward polar residues. Residues 209-223 (TVITQTTNTQGTPNT) show a composition bias toward low complexity.

Belongs to the SPESP1 family. Glycosylated. In testis there are two predominant forms of 77- and 67-kDa and a form of 47-kDa, whereas in epididymal sperm from caput, corpus, and cauda there are two forms of 47- and 43-kDa. Testis forms contain complex carbohydrate residues. Epididymal sperm forms are N-glycosylated. Then undergoes significant glycosylation in the testis and that the majority of these glycoconjugates are removed by the time sperm reach the caput epididymis.

The protein resides in the cytoplasmic vesicle. It is found in the secretory vesicle. Its subcellular location is the acrosome. Functionally, involved in fertilization ability of sperm. The polypeptide is Sperm equatorial segment protein 1 (Rattus norvegicus (Rat)).